The sequence spans 505 residues: Structural protein 27 (505 aa).

3 hydrophobic regions span residues 20–40 (VSLICFLLVFSVTVPFVFSPV), 423–443 (MKGIGSDIQWLLFTVIIMSTI), and 470–490 (IGLGLLLSMVFFGIFIGLILV).

The protein resides in the virion. The protein is Structural protein 27 of His1 virus (isolate Australia/Victoria) (His1V).